A 142-amino-acid chain; its full sequence is Dromaiocalcin-2 (142 aa).

3 disulfides stabilise this stretch: Cys6-Cys17, Cys34-Cys138, and Cys113-Cys130. A C-type lectin domain is found at 13–139; sequence FDGRCYGFFP…CSDRKPFICA (127 aa). 2 positions are modified to phosphoserine: Ser62 and Ser68.

A minor form with some unmodified Ser-68 and partial phosphorylation of Ser-66 may also occur.

The protein resides in the secreted. Its subcellular location is the extracellular space. It is found in the extracellular matrix. The sequence is that of Dromaiocalcin-2 from Dromaius novaehollandiae (Emu).